A 422-amino-acid polypeptide reads, in one-letter code: Serine hydroxymethyltransferase (422 aa).

(6S)-5,6,7,8-tetrahydrofolate contacts are provided by residues L113 and G117–L119. At K222 the chain carries N6-(pyridoxal phosphate)lysine.

It belongs to the SHMT family. As to quaternary structure, homodimer. Pyridoxal 5'-phosphate is required as a cofactor.

It is found in the cytoplasm. The enzyme catalyses (6R)-5,10-methylene-5,6,7,8-tetrahydrofolate + glycine + H2O = (6S)-5,6,7,8-tetrahydrofolate + L-serine. Its pathway is one-carbon metabolism; tetrahydrofolate interconversion. The protein operates within amino-acid biosynthesis; glycine biosynthesis; glycine from L-serine: step 1/1. In terms of biological role, catalyzes the reversible interconversion of serine and glycine with tetrahydrofolate (THF) serving as the one-carbon carrier. This reaction serves as the major source of one-carbon groups required for the biosynthesis of purines, thymidylate, methionine, and other important biomolecules. Also exhibits THF-independent aldolase activity toward beta-hydroxyamino acids, producing glycine and aldehydes, via a retro-aldol mechanism. The polypeptide is Serine hydroxymethyltransferase (Amoebophilus asiaticus (strain 5a2)).